We begin with the raw amino-acid sequence, 176 residues long: Large ribosomal subunit protein uL6 (176 aa).

The protein belongs to the universal ribosomal protein uL6 family. As to quaternary structure, part of the 50S ribosomal subunit.

This protein binds to the 23S rRNA, and is important in its secondary structure. It is located near the subunit interface in the base of the L7/L12 stalk, and near the tRNA binding site of the peptidyltransferase center. The protein is Large ribosomal subunit protein uL6 of Dechloromonas aromatica (strain RCB).